The following is a 324-amino-acid chain: Coproporphyrin III ferrochelatase (324 aa).

Fe(2+) is bound by residues His-184 and Glu-266.

Belongs to the ferrochelatase family.

The protein localises to the cytoplasm. The enzyme catalyses Fe-coproporphyrin III + 2 H(+) = coproporphyrin III + Fe(2+). It functions in the pathway porphyrin-containing compound metabolism; protoheme biosynthesis. Involved in coproporphyrin-dependent heme b biosynthesis. Catalyzes the insertion of ferrous iron into coproporphyrin III to form Fe-coproporphyrin III. The chain is Coproporphyrin III ferrochelatase from Lactiplantibacillus plantarum (strain ATCC BAA-793 / NCIMB 8826 / WCFS1) (Lactobacillus plantarum).